Reading from the N-terminus, the 305-residue chain is Acetyl-coenzyme A carboxylase carboxyl transferase subunit beta (305 aa).

The CoA carboxyltransferase N-terminal domain occupies 29–298; sequence LWTKCESCDA…EMKLPLLESS (270 aa). Cys-33, Cys-36, Cys-52, and Cys-55 together coordinate Zn(2+). The C4-type zinc finger occupies 33 to 55; it reads CESCDALTYTKDLQANLMVCLQC.

This sequence belongs to the AccD/PCCB family. In terms of assembly, acetyl-CoA carboxylase is a heterohexamer composed of biotin carboxyl carrier protein (AccB), biotin carboxylase (AccC) and two subunits each of ACCase subunit alpha (AccA) and ACCase subunit beta (AccD). It depends on Zn(2+) as a cofactor.

It is found in the cytoplasm. The catalysed reaction is N(6)-carboxybiotinyl-L-lysyl-[protein] + acetyl-CoA = N(6)-biotinyl-L-lysyl-[protein] + malonyl-CoA. It functions in the pathway lipid metabolism; malonyl-CoA biosynthesis; malonyl-CoA from acetyl-CoA: step 1/1. Component of the acetyl coenzyme A carboxylase (ACC) complex. Biotin carboxylase (BC) catalyzes the carboxylation of biotin on its carrier protein (BCCP) and then the CO(2) group is transferred by the transcarboxylase to acetyl-CoA to form malonyl-CoA. This chain is Acetyl-coenzyme A carboxylase carboxyl transferase subunit beta, found in Synechococcus sp. (strain ATCC 27144 / PCC 6301 / SAUG 1402/1) (Anacystis nidulans).